Here is a 255-residue protein sequence, read N- to C-terminus: 4-hydroxy-tetrahydrodipicolinate reductase (255 aa).

Residues 9–14, aspartate 35, 89–91, and 115–118 each bind NAD(+); these read GFKGKM, GTT, and APNF. The active-site Proton donor/acceptor is the histidine 145. (S)-2,3,4,5-tetrahydrodipicolinate is bound at residue histidine 146. Lysine 149 functions as the Proton donor in the catalytic mechanism. A (S)-2,3,4,5-tetrahydrodipicolinate-binding site is contributed by 155–156; sequence GT.

The protein belongs to the DapB family.

It is found in the cytoplasm. It carries out the reaction (S)-2,3,4,5-tetrahydrodipicolinate + NAD(+) + H2O = (2S,4S)-4-hydroxy-2,3,4,5-tetrahydrodipicolinate + NADH + H(+). The enzyme catalyses (S)-2,3,4,5-tetrahydrodipicolinate + NADP(+) + H2O = (2S,4S)-4-hydroxy-2,3,4,5-tetrahydrodipicolinate + NADPH + H(+). It participates in amino-acid biosynthesis; L-lysine biosynthesis via DAP pathway; (S)-tetrahydrodipicolinate from L-aspartate: step 4/4. Its function is as follows. Catalyzes the conversion of 4-hydroxy-tetrahydrodipicolinate (HTPA) to tetrahydrodipicolinate. This Streptococcus pneumoniae serotype 19F (strain G54) protein is 4-hydroxy-tetrahydrodipicolinate reductase.